The sequence spans 107 residues: MKIKKGDLVQVITGKDKGKQGKVIVAYPAQDRVLVEGVNRVKKHTKAGQTARGSQTGGIVTTEAPIHVSNVQLVVEKDGNKVVTRVGYRFDDEGNKIRVAKRTGEDI.

It belongs to the universal ribosomal protein uL24 family. In terms of assembly, part of the 50S ribosomal subunit.

One of two assembly initiator proteins, it binds directly to the 5'-end of the 23S rRNA, where it nucleates assembly of the 50S subunit. In terms of biological role, one of the proteins that surrounds the polypeptide exit tunnel on the outside of the subunit. This is Large ribosomal subunit protein uL24 from Streptomyces griseus subsp. griseus (strain JCM 4626 / CBS 651.72 / NBRC 13350 / KCC S-0626 / ISP 5235).